A 410-amino-acid polypeptide reads, in one-letter code: Lipoyl synthase, mitochondrial (410 aa).

The [4Fe-4S] cluster site is built by C125, C130, C136, C157, C161, C164, and S373. Residues 140 to 362 (SDEEGTATAT…EKEAMDMGFL (223 aa)) enclose the Radical SAM core domain.

Belongs to the radical SAM superfamily. Lipoyl synthase family. Requires [4Fe-4S] cluster as cofactor.

The protein resides in the mitochondrion. The enzyme catalyses [[Fe-S] cluster scaffold protein carrying a second [4Fe-4S](2+) cluster] + N(6)-octanoyl-L-lysyl-[protein] + 2 oxidized [2Fe-2S]-[ferredoxin] + 2 S-adenosyl-L-methionine + 4 H(+) = [[Fe-S] cluster scaffold protein] + N(6)-[(R)-dihydrolipoyl]-L-lysyl-[protein] + 4 Fe(3+) + 2 hydrogen sulfide + 2 5'-deoxyadenosine + 2 L-methionine + 2 reduced [2Fe-2S]-[ferredoxin]. The protein operates within protein modification; protein lipoylation via endogenous pathway; protein N(6)-(lipoyl)lysine from octanoyl-[acyl-carrier-protein]: step 2/2. Its function is as follows. Catalyzes the radical-mediated insertion of two sulfur atoms into the C-6 and C-8 positions of the octanoyl moiety bound to the lipoyl domains of lipoate-dependent enzymes, thereby converting the octanoylated domains into lipoylated derivatives. This chain is Lipoyl synthase, mitochondrial, found in Leishmania major.